Reading from the N-terminus, the 172-residue chain is Adenine phosphoribosyltransferase (172 aa).

It belongs to the purine/pyrimidine phosphoribosyltransferase family. In terms of assembly, homodimer.

The protein resides in the cytoplasm. The enzyme catalyses AMP + diphosphate = 5-phospho-alpha-D-ribose 1-diphosphate + adenine. The protein operates within purine metabolism; AMP biosynthesis via salvage pathway; AMP from adenine: step 1/1. Catalyzes a salvage reaction resulting in the formation of AMP, that is energically less costly than de novo synthesis. The polypeptide is Adenine phosphoribosyltransferase (Methanococcus maripaludis (strain C5 / ATCC BAA-1333)).